The following is a 624-amino-acid chain: MNAPDKFSQLMSLTREPLPASRKIYVPGTQADIQVPMREIMQSNGEAVVVYDTSGPYTDPNANIDVRQGLPSVRSPWIESRGDTESYTGRTPFALDDGLKNGDSESLASLRVQAAGLQRTPRRAKAGANVSQMHYARSGIITPEMEYVAIRENQKLAWMEQYLGNAEREARLAGNSFGANIPKIMTPEFVRDEVARGRAIIPANINHPEVEPMVIGRNFLVKINANIGNSAVTSSIEEEVEKLVWSMRWGADTVMDLSTGRNIHTTRDWILRNSPVPIGTVPIYQALEKVGGVAEDLTWAIFRDTLIEQAEQGVDYFTVHAGVRLAFIHLTANRMTGIVSRGGSIMAKWCIAHHKENFIYSHFDEMTEILKAYDVSYSLGDGLRPGSGADANDEAQFAELRTLGELTQQAWQQDVQVMIEGPGHVPMHMVQANMTEQLKACHEAPFYTLGPLTTDIAPGYDHITSGIGAAMIGWFGTAMLCYVTPKEHLGLPDRDDVKVGIITYKIAAHVADVAKGHPGVRARDDALSKARFEFRWMDQFNLSLDPDTARNFHDETLPKDSSKVAHFCSMCGPKFCSMKISQEVRDYAKTRGVSEEQALQSGMQTKSEEFRLAGGEMYIPISPA.

The disordered stretch occupies residues 75 to 99 (SPWIESRGDTESYTGRTPFALDDGL). Substrate-binding positions include N226, M255, Y284, H320, 340–342 (SRG), 381–384 (DGLR), and E420. Residue H424 coordinates Zn(2+). Y447 is a substrate binding site. H488 contacts Zn(2+). [4Fe-4S] cluster contacts are provided by C568, C571, and C576.

This sequence belongs to the ThiC family. As to quaternary structure, homodimer. The cofactor is [4Fe-4S] cluster.

It catalyses the reaction 5-amino-1-(5-phospho-beta-D-ribosyl)imidazole + S-adenosyl-L-methionine = 4-amino-2-methyl-5-(phosphooxymethyl)pyrimidine + CO + 5'-deoxyadenosine + formate + L-methionine + 3 H(+). It participates in cofactor biosynthesis; thiamine diphosphate biosynthesis. Its function is as follows. Catalyzes the synthesis of the hydroxymethylpyrimidine phosphate (HMP-P) moiety of thiamine from aminoimidazole ribotide (AIR) in a radical S-adenosyl-L-methionine (SAM)-dependent reaction. The protein is Phosphomethylpyrimidine synthase of Albidiferax ferrireducens (strain ATCC BAA-621 / DSM 15236 / T118) (Rhodoferax ferrireducens).